Here is a 247-residue protein sequence, read N- to C-terminus: Carboxy-S-adenosyl-L-methionine synthase (247 aa).

S-adenosyl-L-methionine contacts are provided by residues tyrosine 40, 65–67 (GSS), 90–91 (DN), 122–123 (DI), asparagine 137, and arginine 204.

It belongs to the class I-like SAM-binding methyltransferase superfamily. Cx-SAM synthase family. As to quaternary structure, homodimer.

It catalyses the reaction prephenate + S-adenosyl-L-methionine = carboxy-S-adenosyl-L-methionine + 3-phenylpyruvate + H2O. Catalyzes the conversion of S-adenosyl-L-methionine (SAM) to carboxy-S-adenosyl-L-methionine (Cx-SAM). The chain is Carboxy-S-adenosyl-L-methionine synthase from Pseudomonas syringae pv. syringae (strain B728a).